The chain runs to 734 residues: Probable inactive histone-lysine N-methyltransferase SUVR1 (734 aa).

Residues 61 to 163 form a disordered region; that stretch reads QSTEKNKKEE…LPPLKRYVRR (103 aa). Positions 62-81 are enriched in basic and acidic residues; sequence STEKNKKEEEKKKKEEEKKS. The span at 98-109 shows a compositional bias: acidic residues; it reads VQDEEDDMDEDE. The segment covering 113–122 has biased composition (basic residues); sequence KRRLRSRRGR. Positions 123–132 are enriched in low complexity; sequence ASSSSSSSSS. Zn(2+) is bound by residues Cys-460, Cys-464, Cys-468, Cys-477, Cys-545, Cys-549, Cys-551, and Cys-555. The 104-residue stretch at 460 to 563 folds into the Pre-SET domain; the sequence is CSTSCIEDCL…RCGNRVVQRG (104 aa). An SET domain is found at 566–696; that stretch reads NKLQVFFTPN…AMEELAWDYG (131 aa). Residues 577–579 and 652–653 contribute to the S-adenosyl-L-methionine site; these read KGW and NH. Cys-655 provides a ligand contact to Zn(2+). Tyr-695 contributes to the S-adenosyl-L-methionine binding site. Positions 707 to 723 constitute a Post-SET domain; it reads KPFDCLCGSRFCRNKKR. Zn(2+) is bound by residues Cys-711, Cys-713, and Cys-718.

It belongs to the class V-like SAM-binding methyltransferase superfamily. Histone-lysine methyltransferase family. Interacts with SUVR2 and itself.

It localises to the nucleus. The protein resides in the chromosome. In terms of biological role, probable inactive histone-lysine methyltransferase that acts as regulator of transctiptional gene silencing independently of histone H3K9 methylation. Contributes to transcriptional gene silencing at RNA-directed DNA methylation (RdDM) target loci but also at RdDM-independent target loci. The sequence is that of Probable inactive histone-lysine N-methyltransferase SUVR1 (SUVR1) from Arabidopsis thaliana (Mouse-ear cress).